A 918-amino-acid chain; its full sequence is MTDTSSSSSSSSASSVSAHQPTQEKPAKTYDDAASESSDDDDIDALIEELQSNHGVDDEDSDNDGPVAAGEARPVPEEYLQTDPSYGLTSDEVLKRRKKYGLNQMADEKESLVVKFVMFFVGPIQFVMEAAAILAAGLSDWVDFGVICGLLMLNAGVGFVQEFQAGSIVDELKKTLANTAVVIRDGQLVEIPANEVVPGDILQLEDGTVIPTDGRIVTEDCFLQIDQSAITGESLAVDKHYGDQTFSSSTVKRGEGFMVVTATGDNTFVGRAAALVNKAAGGQGHFTEVLNGIGIILLVLVIATLLLVWTACFYRTNGIVRILRYTLGITIIGVPVGLPAVVTTTMAVGAAYLAKKQAIVQKLSAIESLAGVEILCSDKTGTLTKNKLSLHEPYTVEGVSPDDLMLTACLAASRKKKGLDAIDKAFLKSLKQYPKAKDALTKYKVLEFHPFDPVSKKVTAVVESPEGERIVCVKGAPLFVLKTVEEDHPIPEDVHENYENKVAELASRGFRALGVARKRGEGHWEILGVMPCMDPPRDDTAQTVSEARHLGLRVKMLTGDAVGIAKETCRQLGLGTNIYNAERLGLGGGGDMPGSELADFVENADGFAEVFPQHKYRVVEILQNRGYLVAMTGDGVNDAPSLKKADTGIAVEGATDAARSAADIVFLAPGLSAIIDALKTSRQIFHRMYSYVVYRIALSLHLEIFLGLWIAILDNSLDIDLIVFIAIFADVATLAIAYDNAPYSPKPVKWNLPRLWGMSIILGIVLAIGSWITLTTMFLPKGGIIQNFGAMNGIMFLQISLTENWLIFITRAAGPFWSSIPSWQLAGAVFAVDIIATMFTLFGWWSENWTDIVTVVRVWIWSIGIFCVLGGFYYEMSTSEAFDRLMNGKPMKEKKSTRSVEDFMAAMQRVSTQHEKET.

Over residues 1 to 18 (MTDTSSSSSSSSASSVSA) the composition is skewed to low complexity. Positions 1-84 (MTDTSSSSSS…VPEEYLQTDP (84 aa)) are disordered. Residues 1-115 (MTDTSSSSSS…ADEKESLVVK (115 aa)) lie on the Cytoplasmic side of the membrane. Residues 33 to 47 (AASESSDDDDIDALI) show a composition bias toward acidic residues. The residue at position 61 (Ser-61) is a Phosphoserine. A helical transmembrane segment spans residues 116–136 (FVMFFVGPIQFVMEAAAILAA). Residues 137-140 (GLSD) lie on the Extracellular side of the membrane. The chain crosses the membrane as a helical span at residues 141 to 160 (WVDFGVICGLLMLNAGVGFV). Residues 161 to 291 (QEFQAGSIVD…GQGHFTEVLN (131 aa)) are Cytoplasmic-facing. Thr-175 is modified (phosphothreonine). Lys-252 is covalently cross-linked (Glycyl lysine isopeptide (Lys-Gly) (interchain with G-Cter in ubiquitin)). The chain crosses the membrane as a helical span at residues 292-313 (GIGIILLVLVIATLLLVWTACF). Residues 314-325 (YRTNGIVRILRY) lie on the Extracellular side of the membrane. The chain crosses the membrane as a helical span at residues 326-347 (TLGITIIGVPVGLPAVVTTTMA). Residues 348 to 719 (VGAAYLAKKQ…IAILDNSLDI (372 aa)) lie on the Cytoplasmic side of the membrane. Residue Asp-378 is the 4-aspartylphosphate intermediate of the active site. Lys-555 participates in a covalent cross-link: Glycyl lysine isopeptide (Lys-Gly) (interchain with G-Cter in ubiquitin). Mg(2+) contacts are provided by Asp-634 and Asp-638. The helical transmembrane segment at 720–738 (DLIVFIAIFADVATLAIAY) threads the bilayer. Over 739–754 (DNAPYSPKPVKWNLPR) the chain is Extracellular. The helical transmembrane segment at 755–774 (LWGMSIILGIVLAIGSWITL) threads the bilayer. The Cytoplasmic segment spans residues 775-824 (TTMFLPKGGIIQNFGAMNGIMFLQISLTENWLIFITRAAGPFWSSIPSWQ). The chain crosses the membrane as a helical span at residues 825–845 (LAGAVFAVDIIATMFTLFGWW). Over 846-857 (SENWTDIVTVVR) the chain is Extracellular. The helical transmembrane segment at 858-874 (VWIWSIGIFCVLGGFYY) threads the bilayer. Over 875–918 (EMSTSEAFDRLMNGKPMKEKKSTRSVEDFMAAMQRVSTQHEKET) the chain is Cytoplasmic. Ser-911 is subject to Phosphoserine. A phosphothreonine mark is found at Thr-912 and Thr-918.

It belongs to the cation transport ATPase (P-type) (TC 3.A.3) family. Type IIIA subfamily. In terms of assembly, interacts with its cargot receptor EXP1 for its transport within the cell and maturation. Post-translationally, phosphorylated on multiple Ser and Thr residues.

The protein localises to the cell membrane. The catalysed reaction is ATP + H2O + H(+)(in) = ADP + phosphate + 2 H(+)(out). Its function is as follows. The plasma membrane ATPase of plants and fungi is a hydrogen ion pump. The proton gradient it generates drives the active transport of nutrients by H(+)-symport. The resulting external acidification and/or internal alkinization may mediate growth responses. This chain is Plasma membrane ATPase 1 (PMA1), found in Saccharomyces cerevisiae (strain ATCC 204508 / S288c) (Baker's yeast).